The following is a 297-amino-acid chain: E3 ubiquitin-protein ligase RNF212B (297 aa).

The RING-type zinc finger occupies 6 to 40; sequence CNQCFRKDGAHFFVTSCGHIFCKKCMTLEKCAVCG. Residues 87 to 136 adopt a coiled-coil conformation; the sequence is LLIAFYKDRITKLEAAVKEAQEMAASQNKELSALRKENGELKKILDILKG. Disordered stretches follow at residues 152–179 and 198–269; these read VGITSPSQSVAPRPSSHHSSQVVSRSSS and RGLH…ESLP. The span at 163 to 179 shows a compositional bias: low complexity; that stretch reads PRPSSHHSSQVVSRSSS. Positions 206–234 are enriched in polar residues; it reads PGDSYTETPSPASTHSLSYRPSSASSGQG.

In terms of assembly, homodimer. Autoubiquitinated.

It localises to the chromosome. The catalysed reaction is S-ubiquitinyl-[E2 ubiquitin-conjugating enzyme]-L-cysteine + [acceptor protein]-L-lysine = [E2 ubiquitin-conjugating enzyme]-L-cysteine + N(6)-ubiquitinyl-[acceptor protein]-L-lysine.. It participates in protein modification; protein ubiquitination. Ubiquitin E3 ligase that acts as a crucial factor for crossing-over (CO) formation during meiosis. Essential for normal prophase I progression and for ensuring appropriate CO designation in meiosis. Recruits key components of the cross-over machinery either directly ou indirectly, leading to the activation of the MutL-gamma complex. The function of RNF212B in CO designation is dependent on its catalytic activity. This chain is E3 ubiquitin-protein ligase RNF212B (Rnf212b), found in Mus musculus (Mouse).